The chain runs to 312 residues: Protein lon-1 (312 aa).

A signal peptide spans 1–18 (MNYLLTALIALLAPISVA). The region spanning 87-209 (EHNRYRRMVP…GHRNVFVCHY (123 aa)) is the SCP domain. Residue asparagine 142 is glycosylated (N-linked (GlcNAc...) asparagine). The span at 265–284 (TTTTESTTTSTTTEEPTTTC) shows a compositional bias: low complexity. Residues 265 to 312 (TTTTESTTTSTTTEEPTTTCEPDEPEAEGADNNQEEEEENNDGFRMRV) form a disordered region. The segment covering 285–305 (EPDEPEAEGADNNQEEEEENN) has biased composition (acidic residues).

The protein belongs to the CRISP family. In terms of tissue distribution, expressed in hypodermal tissues.

In terms of biological role, regulates body size morphogenesis, but does not affect male tail development. The chain is Protein lon-1 (lon-1) from Caenorhabditis elegans.